Consider the following 299-residue polypeptide: MTILDGKKISNDIKDEIAGEVTKIKKRGEKVPHLAAIIVGKDGASMTYVNSKVKACERVGFESSLFRLPHTVSELELLDKIEELNENDDIDGFIVQLPLPPQINTQKVLNAVDPDKDVDGFHPTNFGKMALDMTSFIPATPFGILELLERYDIPTKGKHTVVIGRSYIVGRPMSILMGRSGFPGNSTVTLTHEFTKNITQVTSQADIIIIAVGIPDFLKGEMIKDDAVIIDVGITRVPDDHAERGYVIKGDVDFENVSKRASFITPVPGGVGPMTVSMLLKNTLLARERHHKRAVDAKK.

Residues 164–166 (GRS) and Ile234 each bind NADP(+).

The protein belongs to the tetrahydrofolate dehydrogenase/cyclohydrolase family. As to quaternary structure, homodimer.

The enzyme catalyses (6R)-5,10-methylene-5,6,7,8-tetrahydrofolate + NADP(+) = (6R)-5,10-methenyltetrahydrofolate + NADPH. The catalysed reaction is (6R)-5,10-methenyltetrahydrofolate + H2O = (6R)-10-formyltetrahydrofolate + H(+). It functions in the pathway one-carbon metabolism; tetrahydrofolate interconversion. Catalyzes the oxidation of 5,10-methylenetetrahydrofolate to 5,10-methenyltetrahydrofolate and then the hydrolysis of 5,10-methenyltetrahydrofolate to 10-formyltetrahydrofolate. In Christiangramia forsetii (strain DSM 17595 / CGMCC 1.15422 / KT0803) (Gramella forsetii), this protein is Bifunctional protein FolD.